The following is a 204-amino-acid chain: NNYCKIKCLKGGVHTACKYGSLKPNCGNKIVVSYGLTKEEKQDILKEHNDFRQKIARGLETRGNPGPQPPAKNMKNLVWNDELAYVAQVWANQCQYGHDTCRDVAKYPVGQNVALTGSTADKYDNPVKLVKMWEDEVKDYNPKKKFSENNFNKIGHYTQMVWANTKEIGCGSIKYIQNEWHKHYLVCNYGPSGNFGNEELYQTK.

Cystine bridges form between cysteine 4-cysteine 17, cysteine 8-cysteine 101, cysteine 26-cysteine 94, and cysteine 170-cysteine 187. Residues 45 to 189 enclose the SCP domain; the sequence is LKEHNDFRQK…WHKHYLVCNY (145 aa).

The protein belongs to the CRISP family. Venom allergen 5-like subfamily. Expressed by the venom gland.

The protein localises to the secreted. This Vespula pensylvanica (Western yellow jacket) protein is Venom allergen 5.